The sequence spans 169 residues: Cysteine synthase B (169 aa).

Lys-45 bears the N6-(pyridoxal phosphate)lysine mark. Asn-75 is a pyridoxal 5'-phosphate binding site. The interval 146–169 (ANGDNPEAHYTSTGPEIWRQTGGT) is disordered.

It belongs to the cysteine synthase/cystathionine beta-synthase family. Pyridoxal 5'-phosphate is required as a cofactor.

It catalyses the reaction O-acetyl-L-serine + hydrogen sulfide = L-cysteine + acetate. The protein operates within amino-acid biosynthesis; L-cysteine biosynthesis; L-cysteine from L-serine: step 2/2. This Pseudomonas syringae pv. syringae protein is Cysteine synthase B (cysM).